Reading from the N-terminus, the 218-residue chain is Protein N-lysine methyltransferase METTL21A (218 aa).

S-adenosyl-L-methionine-binding positions include W47, 73-75, D94, W125, and A143; that span reads GAG.

The protein belongs to the methyltransferase superfamily. METTL21 family. Interacts with heat shock 70 family members; at least some of these proteins are methylation substrates.

It is found in the cytoplasm. It carries out the reaction L-lysyl-[protein] + 3 S-adenosyl-L-methionine = N(6),N(6),N(6)-trimethyl-L-lysyl-[protein] + 3 S-adenosyl-L-homocysteine + 3 H(+). Functionally, protein-lysine methyltransferase that selectively trimethylates residues in heat shock protein 70 (HSP70) family members. Contributes to the in vivo trimethylation of Lys residues in HSPA1 and HSPA8. In vitro methylates 'Lys-561' in HSPA1, 'Lys-564' in HSPA2, 'Lys-585' in HSPA5, 'Lys-563' in HSPA6 and 'Lys-561' in HSPA8. The protein is Protein N-lysine methyltransferase METTL21A (Mettl21A) of Mus musculus (Mouse).